A 152-amino-acid polypeptide reads, in one-letter code: Acidic phospholipase A2 homolog taipoxin gamma chain (152 aa).

The N-terminal stretch at 1–19 (MHPAHLLVLLAVCVSLLGS) is a signal peptide. Cystine bridges form between Cys-38–Cys-104, Cys-42–Cys-46, Cys-54–Cys-151, Cys-56–Cys-72, Cys-71–Cys-132, Cys-78–Cys-125, Cys-88–Cys-118, and Cys-111–Cys-123. Residue Asn-97 is glycosylated (N-linked (GlcNAc...) asparagine).

This sequence belongs to the phospholipase A2 family. Group I subfamily. D49 sub-subfamily. In terms of assembly, heterotrimer of alpha, beta, and gamma chains; non-covalently linked. In terms of processing, contains 0.9% fucose, 2.2% mannose, 4.2% N-acetyl-D-glucosamine, 3.5% galactose, and 3.8% N-acetyl-neuraminic acid (sialic acid). Expressed by the venom gland.

The protein resides in the secreted. Heterotrimer: Snake venom phospholipase A2 (PLA2) heterotrimer that acts as a potent presynaptic neurotoxin by blocking synaptic transmission and synaptic vesicle recycling. May act by binding in a calcium-dependent fashion to neurotonal pentraxin-1 (NPTX1) and neurotonal pentraxin-2 (NPTX2), but not to neuronal pentraxin receptor (NPTXR). Also binds to taipoxin-associated calcium binding protein 49 (RCN2), a protein localized in the lumen of endoplasmic reticulum. Its function is as follows. Monomer (gamma chain): Snake venom phospholipase A2 homolog that is neither toxic nor enzymatically active. Does not bind calcium. This chain is Acidic phospholipase A2 homolog taipoxin gamma chain, found in Oxyuranus scutellatus scutellatus (Australian taipan).